An 86-amino-acid chain; its full sequence is Anti-adapter protein IraP (86 aa).

A coiled-coil region spans residues 1-36; sequence MKNLIAELLLKLAQKEEESKELVAQVEALEIIVTAM.

Belongs to the IraP family. As to quaternary structure, interacts with RssB.

The protein localises to the cytoplasm. Its function is as follows. Inhibits RpoS proteolysis by regulating RssB activity, thereby increasing the stability of the sigma stress factor RpoS especially during phosphate and magnesium starvation, but also in stationary phase and during nitrogen starvation. Its effect on RpoS stability is due to its interaction with RssB, which probably blocks the interaction of RssB with RpoS, and the consequent delivery of the RssB-RpoS complex to the ClpXP protein degradation pathway. The protein is Anti-adapter protein IraP of Salmonella choleraesuis (strain SC-B67).